The primary structure comprises 413 residues: Arginine biosynthesis bifunctional protein ArgJ (413 aa).

The substrate site is built by T160, K186, T197, E277, N408, and T413. The active-site Nucleophile is T197.

The protein belongs to the ArgJ family. In terms of assembly, heterotetramer of two alpha and two beta chains.

The protein resides in the cytoplasm. It catalyses the reaction N(2)-acetyl-L-ornithine + L-glutamate = N-acetyl-L-glutamate + L-ornithine. The enzyme catalyses L-glutamate + acetyl-CoA = N-acetyl-L-glutamate + CoA + H(+). The protein operates within amino-acid biosynthesis; L-arginine biosynthesis; L-ornithine and N-acetyl-L-glutamate from L-glutamate and N(2)-acetyl-L-ornithine (cyclic): step 1/1. It participates in amino-acid biosynthesis; L-arginine biosynthesis; N(2)-acetyl-L-ornithine from L-glutamate: step 1/4. Catalyzes two activities which are involved in the cyclic version of arginine biosynthesis: the synthesis of N-acetylglutamate from glutamate and acetyl-CoA as the acetyl donor, and of ornithine by transacetylation between N(2)-acetylornithine and glutamate. The polypeptide is Arginine biosynthesis bifunctional protein ArgJ (Prochlorococcus marinus (strain SARG / CCMP1375 / SS120)).